The following is a 382-amino-acid chain: MSTWLLPENIADVLPSEARKIEELRRRLLDRFRSYGYEMVMPPLLEYLESLLTSGGNELRLRTFKLVDQVSGRTLGLRADMTPQVARIDAHLLNRQGVTRLCYAGPVLHTRPRGLHASREQLQIGAEIYGHAGLEADQEIQQLMLDALHLAGLKKIRLDLCHAGVLAALFARDAAAAGRGEALYEALAGKDVPRLNELTDDLGADTRAALRALPRLYGDASVLDEARRQLPALPEIARALDDLAHLASQVKDAEVAIDLADLRGYAYHSGAMFAAYVDGVPNAVAHGGRYDHVGQAYGRARPATGFSLDLREIARISPVEARGAAILAPWKQDDALRAAVGALRDAGEVVIQALPGHDHVLDEFACDRALVERDGAWVVEPR.

This sequence belongs to the class-II aminoacyl-tRNA synthetase family. HisZ subfamily. Heteromultimer composed of HisG and HisZ subunits.

Its subcellular location is the cytoplasm. Its pathway is amino-acid biosynthesis; L-histidine biosynthesis; L-histidine from 5-phospho-alpha-D-ribose 1-diphosphate: step 1/9. Its function is as follows. Required for the first step of histidine biosynthesis. May allow the feedback regulation of ATP phosphoribosyltransferase activity by histidine. The sequence is that of ATP phosphoribosyltransferase regulatory subunit from Burkholderia thailandensis (strain ATCC 700388 / DSM 13276 / CCUG 48851 / CIP 106301 / E264).